The chain runs to 144 residues: Large ribosomal subunit protein uL11 (144 aa).

This sequence belongs to the universal ribosomal protein uL11 family. In terms of assembly, part of the ribosomal stalk of the 50S ribosomal subunit. Interacts with L10 and the large rRNA to form the base of the stalk. L10 forms an elongated spine to which L12 dimers bind in a sequential fashion forming a multimeric L10(L12)X complex. One or more lysine residues are methylated.

Forms part of the ribosomal stalk which helps the ribosome interact with GTP-bound translation factors. The protein is Large ribosomal subunit protein uL11 of Streptomyces griseus subsp. griseus (strain JCM 4626 / CBS 651.72 / NBRC 13350 / KCC S-0626 / ISP 5235).